The following is a 199-amino-acid chain: dTTP/UTP pyrophosphatase (199 aa).

Aspartate 79 serves as the catalytic Proton acceptor.

The protein belongs to the Maf family. YhdE subfamily. Requires a divalent metal cation as cofactor.

Its subcellular location is the cytoplasm. It catalyses the reaction dTTP + H2O = dTMP + diphosphate + H(+). It carries out the reaction UTP + H2O = UMP + diphosphate + H(+). In terms of biological role, nucleoside triphosphate pyrophosphatase that hydrolyzes dTTP and UTP. May have a dual role in cell division arrest and in preventing the incorporation of modified nucleotides into cellular nucleic acids. The chain is dTTP/UTP pyrophosphatase from Porphyromonas gingivalis (strain ATCC 33277 / DSM 20709 / CIP 103683 / JCM 12257 / NCTC 11834 / 2561).